Here is a 273-residue protein sequence, read N- to C-terminus: Small ribosomal subunit protein uS3 (273 aa).

One can recognise a KH type-2 domain in the interval 40-110 (IRNLFFVNYR…NLDLTINEIG (71 aa)). Over residues 244 to 265 (QVLSANKLTGSDVETSSIQALT) the composition is skewed to polar residues. The disordered stretch occupies residues 244–273 (QVLSANKLTGSDVETSSIQALTKPNKEDKQ).

This sequence belongs to the universal ribosomal protein uS3 family. In terms of assembly, part of the 30S ribosomal subunit. Forms a tight complex with proteins S10 and S14.

Its function is as follows. Binds the lower part of the 30S subunit head. Binds mRNA in the 70S ribosome, positioning it for translation. The sequence is that of Small ribosomal subunit protein uS3 from Mycoplasma pneumoniae (strain ATCC 29342 / M129 / Subtype 1) (Mycoplasmoides pneumoniae).